Here is a 222-residue protein sequence, read N- to C-terminus: Probable elongation factor 1-beta (222 aa).

The segment at 90-111 is disordered; the sequence is KPAADDDDDVDLFGSDDEEDEE. Residues 94 to 111 show a composition bias toward acidic residues; it reads DDDDDVDLFGSDDEEDEE. Residue S104 is modified to Phosphoserine.

The protein belongs to the EF-1-beta/EF-1-delta family. In terms of assembly, EF-1 is composed of 4 subunits: alpha, beta, beta' and gamma. Phosphorylation affects the GDP/GTP exchange rate.

Functionally, EF-1-beta and EF-1-delta stimulate the exchange of GDP bound to EF-1-alpha to GTP. This is Probable elongation factor 1-beta from Drosophila melanogaster (Fruit fly).